A 274-amino-acid polypeptide reads, in one-letter code: Thiamine kinase (274 aa).

Belongs to the thiamine kinase family.

The catalysed reaction is thiamine + ATP = thiamine phosphate + ADP + H(+). It functions in the pathway cofactor biosynthesis; thiamine diphosphate biosynthesis; thiamine phosphate from thiamine: step 1/1. In terms of biological role, catalyzes the ATP-dependent phosphorylation of thiamine to thiamine phosphate. Is involved in thiamine salvage. This is Thiamine kinase from Escherichia coli O9:H4 (strain HS).